The sequence spans 1784 residues: Sodium channel protein type 4 subunit alpha B (1784 aa).

Over 1–130 the chain is Cytoplasmic; that stretch reads MARLLPPTGT…RAAIRILIHS (130 aa). Residues 29-48 are disordered; it reads AEEAAEQERMKEQNVKVAEE. An I repeat occupies 112-429; sequence CLSPFNPVRR…VVAMAYAEQN (318 aa). A helical membrane pass occupies residues 131–149; sequence LFSLVIMLTILTNCVFMAM. At 150 to 156 the chain is on the extracellular side; the sequence is SDPPGWS. A helical transmembrane segment spans residues 157–177; that stretch reads KILEYVFTGIYTFEAMVKVLS. Residues 178-191 are Cytoplasmic-facing; the sequence is RGFCIGDFTFLRDP. The chain crosses the membrane as a helical span at residues 192-209; that stretch reads WNWLDFMVISMAYLTEFV. The Extracellular portion of the chain corresponds to 210-215; that stretch reads DLGNIS. N-linked (GlcNAc...) asparagine glycosylation is present at Asn213. Residues 216-232 form a helical membrane-spanning segment; sequence ALRTFRVLRALKTITVI. The Cytoplasmic segment spans residues 233 to 251; sequence PGLKTIVGALIQSVKKLAD. A helical membrane pass occupies residues 252 to 271; it reads VMILTVFCLSVFALIGLQLF. The Extracellular portion of the chain corresponds to 272–366; the sequence is MGNLRQKCVL…PNYGYTSYDN (95 aa). Cys279 and Cys335 are disulfide-bonded. Residues Asn291, Asn304, and Asn337 are each glycosylated (N-linked (GlcNAc...) asparagine). A disulfide bridge links Cys344 with Cys350. An intramembrane region (pore-forming) is located at residues 367-391; the sequence is FGWAFLALFRLMTQDFWENLFQLTL. Over 392-398 the chain is Extracellular; the sequence is RAAGKTY. Residues 399-419 traverse the membrane as a helical segment; the sequence is MIFFVVIIFLGSFYLINLILA. At 420 to 568 the chain is on the cytoplasmic side; the sequence is VVAMAYAEQN…RIVYLFVMDP (149 aa). Positions 455-478 are disordered; sequence EQKNGMVNGSKTSLSSKKKGDNDQ. The stretch at 550 to 821 is one II repeat; that stretch reads CCIPWVKFKR…QIAISRITRG (272 aa). Residues 569–587 form a helical membrane-spanning segment; that stretch reads FVDLGITLCIVLNTVFMAM. The Extracellular portion of the chain corresponds to 588–598; sequence EHYPMSVHVEE. Residues 599-618 form a helical membrane-spanning segment; the sequence is VLAIGNLVFTGIFAAEMVLK. The Cytoplasmic portion of the chain corresponds to 619 to 632; the sequence is LIALDPYYYFQVGW. Residues 633-652 traverse the membrane as a helical segment; the sequence is NIFDSIIVTMSLVELMLADV. The Extracellular segment spans residues 653–654; it reads EG. A helical membrane pass occupies residues 655–672; sequence LSVLRSFRLMRVFKLAKS. The Cytoplasmic portion of the chain corresponds to 673–688; that stretch reads WPTLNMLIKIIGNSVG. Residues 689-707 form a helical membrane-spanning segment; the sequence is ALGNLTLVLAIIVFIFAVV. The Extracellular segment spans residues 708–736; it reads GMQLFGKSYTDSVCKISSDCELPRWHMAD. An intrachain disulfide couples Cys721 to Cys727. Positions 737–757 form an intramembrane region, pore-forming; sequence FFHAFLIIFRVLCGEWIETMW. Residues 758-768 are Extracellular-facing; the sequence is DCMEVAGQGMC. Cys759 and Cys768 are oxidised to a cystine. A helical transmembrane segment spans residues 769–787; sequence IIVFMMVMVIGNLVVLNLF. At 788–973 the chain is on the cytoplasmic side; the sequence is LALLLSSFSG…TCFAIVEHSY (186 aa). The interval 870–928 is disordered; that stretch reads PIANGESDDDDGNGSSEDEDDEGRDINMKKKNGDESSTCSTVDKPPEVEDLVEEEEEDL. Over residues 875 to 892 the composition is skewed to acidic residues; it reads ESDDDDGNGSSEDEDDEG. Basic and acidic residues predominate over residues 893–903; that stretch reads RDINMKKKNGD. The span at 917–928 shows a compositional bias: acidic residues; that stretch reads VEDLVEEEEEDL. An III repeat occupies 954–1269; sequence KGKAWWNFRK…KKYYNAMKKL (316 aa). The chain crosses the membrane as a helical span at residues 974 to 991; it reads FETFIIFMILLSSGALAF. The Extracellular portion of the chain corresponds to 992–1004; the sequence is EDIYIEQRRMIKI. The chain crosses the membrane as a helical span at residues 1005–1023; it reads ILEYADQVFTYVFVVEMLL. The Cytoplasmic segment spans residues 1024-1037; that stretch reads KWVAYGFKVYFTNA. Residues 1038 to 1056 traverse the membrane as a helical segment; that stretch reads WCWLDFLIVDVSLISLTAN. At 1057 to 1064 the chain is on the extracellular side; the sequence is ILGYSELG. The chain crosses the membrane as a helical span at residues 1065-1083; sequence AIKSLRTLRALRPLRALSR. The Cytoplasmic segment spans residues 1084–1101; that stretch reads FEGMRVVVVNALVGAIPS. The helical transmembrane segment at 1102–1121 threads the bilayer; it reads IFNVLLVCLIFWLIFSIMGV. Over 1122–1173 the chain is Extracellular; that stretch reads NLFAGKFYYCFNETSEEVFDHNVVNNKTDCYELMEFHPEVRWMNGKINFDNV. A disulfide bridge links Cys1131 with Cys1151. Asn1133 and Asn1147 each carry an N-linked (GlcNAc...) asparagine glycan. Residues 1174 to 1195 constitute an intramembrane region (pore-forming); that stretch reads GMGYLALLQVATFKGWMDIMYS. Over 1196-1212 the chain is Extracellular; it reads AVDSRAIESQPVYEANL. The chain crosses the membrane as a helical span at residues 1213-1234; the sequence is YMYIYFVIFIIFGSFFTLNLFI. The Cytoplasmic segment spans residues 1235-1297; sequence GVIIDNFNQQ…LVFDFVTQQF (63 aa). The segment at 1253-1255 is important for rapid channel inactivation; the sequence is IFM. Residues 1278-1575 form an IV repeat; sequence IPRPTNCCQG…WEKFDPTASQ (298 aa). Residues 1298–1315 traverse the membrane as a helical segment; it reads FDIFIMVMICLNMVTMMV. The Extracellular portion of the chain corresponds to 1316–1326; the sequence is ETDDQSAEIEE. Residues 1327 to 1345 form a helical membrane-spanning segment; the sequence is ILFYINFAFIILFTGECVL. At 1346–1357 the chain is on the cytoplasmic side; that stretch reads KITALRYHYFSI. The helical transmembrane segment at 1358–1375 threads the bilayer; the sequence is GWNIFDFVVVILSILGIG. At 1376–1388 the chain is on the extracellular side; the sequence is LADLIEKYFVSPT. The helical transmembrane segment at 1389–1405 threads the bilayer; that stretch reads LFRVIRLARIGRVLRLI. Over 1406-1424 the chain is Cytoplasmic; that stretch reads RGAKGIRTLLFALMMSLPA. A helical membrane pass occupies residues 1425–1442; sequence LFNIGLLLFLIMFIFSIF. Residues 1443-1464 are Extracellular-facing; it reads GMSNFAYVKKEVGIDDMMNFET. The pore-forming intramembrane region spans 1465–1487; it reads FGNSIICMFMITTSAGWDGLLAP. At 1488–1516 the chain is on the extracellular side; it reads ILNSPPDCDPDVDNPGSTTRGNCGNAAVG. Cysteines 1495 and 1510 form a disulfide. The chain crosses the membrane as a helical span at residues 1517 to 1539; sequence IVFFCSYIVMSFLVVVNMYIAII. Over 1540-1784 the chain is Cytoplasmic; sequence LENFNVATEE…AADNLRESIV (245 aa). In terms of domain architecture, IQ spans 1669–1698; it reads EEVAASTIQRAYRSHILKRCVKQASYMYRD.

It belongs to the sodium channel (TC 1.A.1.10) family. Nav1.4/SCN4A subfamily. As to quaternary structure, voltage-gated sodium (Nav) channels consist of an ion-conducting alpha subunit which is functional on its own associated with regulatory beta subunits. Lacks the cysteine which covalently binds the conotoxin GVIIJ. This cysteine (position 719) is speculated in other sodium channel subunits alpha to be implied in covalent binding with the sodium channel subunit beta-2 or beta-4. In terms of tissue distribution, expressed in skeletal muscle, heart, brain, spinal cord, and eye.

Its subcellular location is the cell membrane. The enzyme catalyses Na(+)(in) = Na(+)(out). Pore-forming subunit of a voltage-gated sodium (Nav) channel that directly mediates the depolarizing phase of action potentials in excitable membranes. Navs, also called VGSCs (voltage-gated sodium channels) or VDSCs (voltage-dependent sodium channels), operate by switching between closed and open conformations depending on the voltage difference across the membrane. In the open conformation they allow Na(+) ions to selectively pass through the pore, along their electrochemical gradient. The influx of Na+ ions provokes membrane depolarization, initiating the propagation of electrical signals throughout cells and tissues. This is Sodium channel protein type 4 subunit alpha B (scn4ab) from Danio rerio (Zebrafish).